Here is a 319-residue protein sequence, read N- to C-terminus: COP9 signalosome complex subunit 6 (319 aa).

The region spanning 33-166 (VALHPLVILN…VSVYESVIDI (134 aa)) is the MPN domain.

This sequence belongs to the peptidase M67A family. CSN6 subfamily. In terms of assembly, component of the CSN complex, probably composed of cops1, cops2, cops3, cops4, cops5, cops6, cops7, cops8 and cops9.

The protein resides in the cytoplasm. The protein localises to the nucleus. Component of the COP9 signalosome complex (CSN), a complex involved in various cellular and developmental processes. The CSN complex is an essential regulator of the ubiquitin (Ubl) conjugation pathway by mediating the deneddylation of the cullin subunits of E3 ligase complexes, leading to modify the Ubl ligase activity. The polypeptide is COP9 signalosome complex subunit 6 (cops6) (Xenopus tropicalis (Western clawed frog)).